The chain runs to 367 residues: Undecaprenyl-phosphate alpha-N-acetylglucosaminyl 1-phosphate transferase (367 aa).

The next 10 helical transmembrane spans lie at Leu3–Phe23, Leu46–Val66, Tyr69–Leu89, Val132–Phe152, Ile158–Trp178, Ile187–Leu207, Val213–Glu233, Ile242–Met262, Ala294–Tyr314, and Val318–Ile338.

It belongs to the glycosyltransferase 4 family. WecA subfamily. Mg(2+) is required as a cofactor. Requires Mn(2+) as cofactor.

It is found in the cell inner membrane. The enzyme catalyses di-trans,octa-cis-undecaprenyl phosphate + UDP-N-acetyl-alpha-D-glucosamine = N-acetyl-alpha-D-glucosaminyl-di-trans,octa-cis-undecaprenyl diphosphate + UMP. The protein operates within bacterial outer membrane biogenesis; LPS O-antigen biosynthesis. It participates in bacterial outer membrane biogenesis; enterobacterial common antigen biosynthesis. Its function is as follows. Catalyzes the transfer of the GlcNAc-1-phosphate moiety from UDP-GlcNAc onto the carrier lipid undecaprenyl phosphate (C55-P), yielding GlcNAc-pyrophosphoryl-undecaprenyl (GlcNAc-PP-C55). This Escherichia coli O6:H1 (strain CFT073 / ATCC 700928 / UPEC) protein is Undecaprenyl-phosphate alpha-N-acetylglucosaminyl 1-phosphate transferase.